The primary structure comprises 434 residues: Serine hydroxymethyltransferase (434 aa).

(6S)-5,6,7,8-tetrahydrofolate is bound by residues Leu-131 and 135-137 (GHL). N6-(pyridoxal phosphate)lysine is present on Lys-240.

Belongs to the SHMT family. Homodimer. It depends on pyridoxal 5'-phosphate as a cofactor.

It is found in the cytoplasm. The enzyme catalyses (6R)-5,10-methylene-5,6,7,8-tetrahydrofolate + glycine + H2O = (6S)-5,6,7,8-tetrahydrofolate + L-serine. Its pathway is one-carbon metabolism; tetrahydrofolate interconversion. The protein operates within amino-acid biosynthesis; glycine biosynthesis; glycine from L-serine: step 1/1. Its function is as follows. Catalyzes the reversible interconversion of serine and glycine with tetrahydrofolate (THF) serving as the one-carbon carrier. This reaction serves as the major source of one-carbon groups required for the biosynthesis of purines, thymidylate, methionine, and other important biomolecules. Also exhibits THF-independent aldolase activity toward beta-hydroxyamino acids, producing glycine and aldehydes, via a retro-aldol mechanism. This chain is Serine hydroxymethyltransferase, found in Gluconobacter oxydans (strain 621H) (Gluconobacter suboxydans).